Reading from the N-terminus, the 302-residue chain is Protein FdhE homolog (302 aa).

This sequence belongs to the FdhE family.

Its subcellular location is the cytoplasm. In terms of biological role, necessary for formate dehydrogenase activity. This Haemophilus influenzae (strain PittEE) protein is Protein FdhE homolog.